An 839-amino-acid chain; its full sequence is ABC transporter A family member 7 (839 aa).

The next 7 membrane-spanning stretches (helical) occupy residues 30-50 (GVQIAIPMALVIVLVILKLWI), 238-258 (IASLLGGSFFPFALSFVLPLF), 286-306 (IMTFIFNFLTYVVIVSVISLI), 321-341 (FALFLLLFLWGLSMVSFAFFL), 352-372 (SIFGYFFVMVMVNLNSTLSLF), 378-398 (VFYYWVPILAFSRGISTLCGL), and 419-439 (ILFWLFIDTIVYLTLAVYLDK). The ABC transporter domain maps to 525-756 (LIVQGLRKQF…FGDGYSVRID (232 aa)). 559–566 (GPNGAGKT) contacts ATP.

Belongs to the ABC transporter superfamily. ABCA family.

Its subcellular location is the membrane. This Dictyostelium discoideum (Social amoeba) protein is ABC transporter A family member 7 (abcA7).